We begin with the raw amino-acid sequence, 508 residues long: ATP synthase subunit alpha, chloroplastic (508 aa).

Position 170-177 (170-177) interacts with ATP; that stretch reads GDRQTGKT.

This sequence belongs to the ATPase alpha/beta chains family. In terms of assembly, F-type ATPases have 2 components, CF(1) - the catalytic core - and CF(0) - the membrane proton channel. CF(1) has five subunits: alpha(3), beta(3), gamma(1), delta(1), epsilon(1). CF(0) has four main subunits: a, b, b' and c.

The protein localises to the plastid. It localises to the chloroplast thylakoid membrane. The catalysed reaction is ATP + H2O + 4 H(+)(in) = ADP + phosphate + 5 H(+)(out). Its function is as follows. Produces ATP from ADP in the presence of a proton gradient across the membrane. The alpha chain is a regulatory subunit. The sequence is that of ATP synthase subunit alpha, chloroplastic from Lactuca sativa (Garden lettuce).